Reading from the N-terminus, the 54-residue chain is 2-aminomuconate deaminase (54 aa).

Homohexamer.

It carries out the reaction (2Z,4E)-2-aminomuconate + H2O = (3E)-2-oxohex-3-enedioate + NH4(+). The protein operates within xenobiotic degradation; nitrobenzene degradation. Converts 2-aminomuconate to 4-oxalocrotonate, an intermediate step in the biodegradation of nitrobenzene. The chain is 2-aminomuconate deaminase from Ectopseudomonas oleovorans (Pseudomonas oleovorans).